The sequence spans 370 residues: Putative agmatine deiminase (370 aa).

Cys-361 functions as the Amidino-cysteine intermediate in the catalytic mechanism.

This sequence belongs to the agmatine deiminase family.

The enzyme catalyses agmatine + H2O = N-carbamoylputrescine + NH4(+). The polypeptide is Putative agmatine deiminase (Shewanella sp. (strain MR-4)).